A 508-amino-acid polypeptide reads, in one-letter code: Ribose import ATP-binding protein RbsA 2 (508 aa).

ABC transporter domains follow at residues 6-241 and 254-499; these read LTIH…VGRE and ERSG…SGMG. 38–45 lines the ATP pocket; it reads GENGAGKS.

The protein belongs to the ABC transporter superfamily. Ribose importer (TC 3.A.1.2.1) family. In terms of assembly, the complex is composed of an ATP-binding protein (RbsA), two transmembrane proteins (RbsC) and a solute-binding protein (RbsB).

It localises to the cell inner membrane. It catalyses the reaction D-ribose(out) + ATP + H2O = D-ribose(in) + ADP + phosphate + H(+). Part of the ABC transporter complex RbsABC involved in ribose import. Responsible for energy coupling to the transport system. The chain is Ribose import ATP-binding protein RbsA 2 from Rhizobium etli (strain ATCC 51251 / DSM 11541 / JCM 21823 / NBRC 15573 / CFN 42).